The chain runs to 135 residues: Interleukin-4 (135 aa).

The first 24 residues, 1 to 24 (MGLTSQLIPALVCLLVCTSHFVHG), serve as a signal peptide directing secretion. Disulfide bonds link Cys27-Cys135, Cys48-Cys85, and Cys70-Cys105. N-linked (GlcNAc...) asparagine glycans are attached at residues Asn62 and Asn96.

This sequence belongs to the IL-4/IL-13 family.

It localises to the secreted. Participates in at least several B-cell activation processes as well as of other cell types. It is a costimulator of DNA-synthesis. It induces the expression of class II MHC molecules on resting B-cells. It enhances both secretion and cell surface expression of IgE and IgG1. It also regulates the expression of the low affinity Fc receptor for IgE (CD23) on both lymphocytes and monocytes. Positively regulates IL31RA expression in macrophages. Stimulates autophagy in dendritic cells by interfering with mTORC1 signaling and through the induction of RUFY4. The polypeptide is Interleukin-4 (IL4) (Capra hircus (Goat)).